We begin with the raw amino-acid sequence, 334 residues long: Putative ankyrin repeat protein RBE_0347 (334 aa).

ANK repeat units follow at residues 80 to 90 (EQGINPNIQDS), 91 to 120 (SGNTLLLYACQSSLVEVVQFLLKKGANPNI), 124 to 161 (SDNTPLSKIISNRFIDKTEIYIAKLLLQNGALTELKDF), and 162 to 191 (VGFTPIQSATQYGHTEIVKSLIQNGADINV).

The sequence is that of Putative ankyrin repeat protein RBE_0347 from Rickettsia bellii (strain RML369-C).